Here is a 252-residue protein sequence, read N- to C-terminus: Small ribosomal subunit protein uS3 (252 aa).

One can recognise a KH type-2 domain in the interval 39–109 (IRNYVQTRLK…EVKIDVVEVV (71 aa)). The span at 221-241 (EMKRIKERRSDSGPRSRNDRS) shows a compositional bias: basic and acidic residues. The segment at 221–252 (EMKRIKERRSDSGPRSRNDRSQKRRRRPNDRG) is disordered. Residues 242 to 252 (QKRRRRPNDRG) are compositionally biased toward basic residues.

Belongs to the universal ribosomal protein uS3 family. As to quaternary structure, part of the 30S ribosomal subunit. Forms a tight complex with proteins S10 and S14.

In terms of biological role, binds the lower part of the 30S subunit head. Binds mRNA in the 70S ribosome, positioning it for translation. The protein is Small ribosomal subunit protein uS3 of Chlorobium luteolum (strain DSM 273 / BCRC 81028 / 2530) (Pelodictyon luteolum).